The primary structure comprises 764 residues: Ribosomal protein S6 kinase alpha-6 (764 aa).

The tract at residues 1 to 24 (MLPFAPVEDPWDQEDMEVFGSTSS) is disordered. Residues 93–350 (FDLLKVLGQG…VEEVKRHAFF (258 aa)) enclose the Protein kinase 1 domain. Residues 99–107 (LGQGSFGKV) and Lys125 contribute to the ATP site. Residue Asp218 is the Proton acceptor of the active site. Ser252, Ser392, and Ser409 each carry phosphoserine. Residues 351–420 (ASIDWNKLYK…VATSIAEEYK (70 aa)) form the AGC-kinase C-terminal domain. The region spanning 446 to 706 (YELKEDIGIG…VLKHPWITQR (261 aa)) is the Protein kinase 2 domain. ATP is bound by residues 452–460 (IGIGSYSVC) and Lys475. Asp563 functions as the Proton acceptor in the catalytic mechanism. Thr601 is modified (phosphothreonine).

The protein belongs to the protein kinase superfamily. AGC Ser/Thr protein kinase family. S6 kinase subfamily. In terms of assembly, forms a complex with MAPK3/ERK1 but not with MAPK9 or MAPK14 in serum-starved cells. Mg(2+) serves as cofactor. In terms of processing, phosphorylated at Ser-252, Ser-392, and Ser-409 in serum-starved cells.

The protein resides in the cytoplasm. The protein localises to the cytosol. It localises to the nucleus. The enzyme catalyses L-seryl-[protein] + ATP = O-phospho-L-seryl-[protein] + ADP + H(+). It carries out the reaction L-threonyl-[protein] + ATP = O-phospho-L-threonyl-[protein] + ADP + H(+). Its activity is regulated as follows. Constitutively activated by phosphorylation at Ser-252, Ser-392, and Ser-409 in serum-starved cells. Does not require growth factor stimulation for significant kinase activity. Functionally, constitutively active serine/threonine-protein kinase that exhibits growth-factor-independent kinase activity and that may participate in p53/TP53-dependent cell growth arrest signaling and play an inhibitory role during embryogenesis. The polypeptide is Ribosomal protein S6 kinase alpha-6 (Rps6ka6) (Mus musculus (Mouse)).